The sequence spans 37 residues: MKVRASVKRVCRNCKIVKRRGTVRVICTEARHKQRQG.

It belongs to the bacterial ribosomal protein bL36 family.

The chain is Large ribosomal subunit protein bL36 from Halorhodospira halophila (strain DSM 244 / SL1) (Ectothiorhodospira halophila (strain DSM 244 / SL1)).